The chain runs to 619 residues: Mitogen-activated protein kinase kinase kinase 2 (619 aa).

The disordered stretch occupies residues Leu-25–Arg-45. Ser-26 carries the phosphoserine modification. A PB1 domain is found at Asp-43–Asn-122. 3 positions are modified to phosphoserine: Ser-153, Ser-159, and Ser-164. Disordered stretches follow at residues Ile-154–Glu-173, Leu-201–Ser-248, and Arg-289–Asn-355. Positions Pro-203 to Ser-219 are enriched in low complexity. Residues Ser-239, Ser-297, Ser-311, Ser-331, Ser-344, and Ser-349 each carry the phosphoserine modification. Residues Thr-290–Val-299 are compositionally biased toward polar residues. Residues Ser-300 to Ser-315 are compositionally biased toward low complexity. Positions Asp-322–Asp-332 are enriched in basic and acidic residues. Residues Arg-357–His-617 enclose the Protein kinase domain. ATP is bound by residues Leu-362 to Tyr-371 and Lys-385. Asp-483 acts as the Proton acceptor in catalysis.

It belongs to the protein kinase superfamily. STE Ser/Thr protein kinase family. MAP kinase kinase kinase subfamily. In terms of assembly, interacts with PKN2; the interaction activates PKN2 kinase activity in a MAP3K2-independent kinase activity. Self-associates. Binds both upstream activators and downstream substrates in multimolecular complexes. Interacts (via the kinase catalytic domain) with STK38. Interacts with XIAP/BIRC4. Mg(2+) serves as cofactor. In terms of processing, autophosphorylated. Ubiquitination by XIAP/BIRC4 does not lead to proteasomal degradation.

Its subcellular location is the cytoplasm. The protein localises to the nucleus. The enzyme catalyses L-seryl-[protein] + ATP = O-phospho-L-seryl-[protein] + ADP + H(+). It carries out the reaction L-threonyl-[protein] + ATP = O-phospho-L-threonyl-[protein] + ADP + H(+). Its activity is regulated as follows. Activated by phosphorylation on Thr-524. Functionally, component of a protein kinase signal transduction cascade. Regulates the JNK and ERK5 pathways by phosphorylating and activating MAP2K5 and MAP2K7. Plays a role in caveolae kiss-and-run dynamics. In Homo sapiens (Human), this protein is Mitogen-activated protein kinase kinase kinase 2 (MAP3K2).